A 71-amino-acid polypeptide reads, in one-letter code: uncharacterized protein (71 aa).

Residues 1–23 (MTLLIILILKYLLCLENLKNISL) form the signal peptide. Asn20, Asn28, Asn44, and Asn50 each carry an N-linked (GlcNAc...) asparagine glycan.

The protein localises to the secreted. This is an uncharacterized protein from Dictyostelium discoideum (Social amoeba).